A 197-amino-acid chain; its full sequence is Pyridoxal 5'-phosphate synthase subunit PdxT (197 aa).

Residue 52–54 (GES) coordinates L-glutamine. Cys83 functions as the Nucleophile in the catalytic mechanism. Residues Arg115 and 142-143 (IR) each bind L-glutamine. Catalysis depends on charge relay system residues His178 and Glu180.

It belongs to the glutaminase PdxT/SNO family. In the presence of PdxS, forms a dodecamer of heterodimers. Only shows activity in the heterodimer.

It carries out the reaction aldehydo-D-ribose 5-phosphate + D-glyceraldehyde 3-phosphate + L-glutamine = pyridoxal 5'-phosphate + L-glutamate + phosphate + 3 H2O + H(+). The enzyme catalyses L-glutamine + H2O = L-glutamate + NH4(+). It functions in the pathway cofactor biosynthesis; pyridoxal 5'-phosphate biosynthesis. In terms of biological role, catalyzes the hydrolysis of glutamine to glutamate and ammonia as part of the biosynthesis of pyridoxal 5'-phosphate. The resulting ammonia molecule is channeled to the active site of PdxS. This Korarchaeum cryptofilum (strain OPF8) protein is Pyridoxal 5'-phosphate synthase subunit PdxT.